The following is a 159-amino-acid chain: SsrA-binding protein (159 aa).

This sequence belongs to the SmpB family.

Its subcellular location is the cytoplasm. In terms of biological role, required for rescue of stalled ribosomes mediated by trans-translation. Binds to transfer-messenger RNA (tmRNA), required for stable association of tmRNA with ribosomes. tmRNA and SmpB together mimic tRNA shape, replacing the anticodon stem-loop with SmpB. tmRNA is encoded by the ssrA gene; the 2 termini fold to resemble tRNA(Ala) and it encodes a 'tag peptide', a short internal open reading frame. During trans-translation Ala-aminoacylated tmRNA acts like a tRNA, entering the A-site of stalled ribosomes, displacing the stalled mRNA. The ribosome then switches to translate the ORF on the tmRNA; the nascent peptide is terminated with the 'tag peptide' encoded by the tmRNA and targeted for degradation. The ribosome is freed to recommence translation, which seems to be the essential function of trans-translation. This is SsrA-binding protein from Bifidobacterium adolescentis (strain ATCC 15703 / DSM 20083 / NCTC 11814 / E194a).